A 103-amino-acid polypeptide reads, in one-letter code: Defensin-like protein 268 (103 aa).

A signal peptide spans 1-24 (MARLIFHFVFALILAAYLLSVTDA). 4 cysteine pairs are disulfide-bonded: Cys-44-Cys-103, Cys-68-Cys-87, Cys-74-Cys-98, and Cys-78-Cys-100.

This sequence belongs to the DEFL family.

Its subcellular location is the secreted. The protein is Defensin-like protein 268 of Arabidopsis thaliana (Mouse-ear cress).